The chain runs to 372 residues: Monocyte differentiation antigen CD14 (372 aa).

The first 17 residues, 1–17 (MEPVPCLLLLLLPLLRA), serve as a signal peptide directing secretion. 2 disulfide bridges follow: C25–C36 and C34–C51. N37 is a glycosylation site (N-linked (GlcNAc...) asparagine). LRR repeat units follow at residues 54–82 (AVQV…QRRY), 83–118 (ADVV…YSRL), 119–145 (KELA…GPAL), 146–173 (STLS…KPGL), 174–197 (QVLN…FSAL), 198–225 (TTLD…FPAL), 226–252 (QDLA…GVQP), 253–275 (HHLD…PSAL), 276–296 (NSLN…PAKL), 297–318 (NVLD…LPKV), and 319–346 (VNLS…SGVF). Residue N152 is glycosylated (N-linked (GlcNAc...) asparagine). Disulfide bonds link C188-C218 and C242-C269. N-linked (GlcNAc...) asparagine glycosylation is present at N279. Positions 287–372 (QVPKGLPAKL…ALLQGARGFI (86 aa)) are required for response to bacterial lipopolysaccharide (LPS). An N-linked (GlcNAc...) asparagine glycan is attached at N320. Residue N342 is the site of GPI-anchor amidated asparagine attachment. Positions 343–372 (SGVFPACPPSPLAMGMSGTLALLQGARGFI) are cleaved as a propeptide — removed in mature form.

As to quaternary structure, belongs to the lipopolysaccharide (LPS) receptor, a multi-protein complex containing at least CD14, LY96 and TLR4. Interacts with LPS-bound LPB. Interacts with LPAR1. Interacts with the TLR2:TLR6 or TLR2:TLR1 heterodimers; upon interaction with ligands such as diacylated lipopeptides and triacylated lipopeptides, respectively. Interacts with MYO18A. Interacts with FSTL1.

It is found in the cell membrane. Its subcellular location is the secreted. It localises to the membrane raft. The protein localises to the golgi apparatus. Functionally, coreceptor for bacterial lipopolysaccharide. In concert with LBP, binds to monomeric lipopolysaccharide and delivers it to the LY96/TLR4 complex, thereby mediating the innate immune response to bacterial lipopolysaccharide (LPS). Acts via MyD88, TIRAP and TRAF6, leading to NF-kappa-B activation, cytokine secretion and the inflammatory response. Acts as a coreceptor for TLR2:TLR6 heterodimer in response to diacylated lipopeptides and for TLR2:TLR1 heterodimer in response to triacylated lipopeptides, these clusters trigger signaling from the cell surface and subsequently are targeted to the Golgi in a lipid-raft dependent pathway. Binds electronegative LDL (LDL(-)) and mediates the cytokine release induced by LDL(-). In Oryctolagus cuniculus (Rabbit), this protein is Monocyte differentiation antigen CD14 (CD14).